Consider the following 529-residue polypeptide: Probable bifunctional tRNA threonylcarbamoyladenosine biosynthesis protein (529 aa).

The segment at 1–324 (MIVLGLEGTA…FRIDEVDAPW (324 aa)) is kae1. His107, His111, and Tyr128 together coordinate Fe cation. L-threonylcarbamoyladenylate contacts are provided by residues 128–132 (YVSGG), Asp160, Gly173, Glu177, and Asn257. Asp285 is a Fe cation binding site. One can recognise a Protein kinase domain in the interval 329 to 529 (SRKDYGKAGA…SAIRRRHRYV (201 aa)). Residues 335-342 (KAGAESRI) and Lys355 each bind ATP. Asp447 acts as the Proton acceptor; for kinase activity in catalysis.

This sequence in the N-terminal section; belongs to the KAE1 / TsaD family. It in the C-terminal section; belongs to the protein kinase superfamily. Tyr protein kinase family. BUD32 subfamily. Component of the KEOPS complex that consists of Kae1, Bud32, Cgi121 and Pcc1; the whole complex dimerizes. Fe(2+) serves as cofactor.

The protein resides in the cytoplasm. It catalyses the reaction L-seryl-[protein] + ATP = O-phospho-L-seryl-[protein] + ADP + H(+). It carries out the reaction L-threonyl-[protein] + ATP = O-phospho-L-threonyl-[protein] + ADP + H(+). The enzyme catalyses L-threonylcarbamoyladenylate + adenosine(37) in tRNA = N(6)-L-threonylcarbamoyladenosine(37) in tRNA + AMP + H(+). Required for the formation of a threonylcarbamoyl group on adenosine at position 37 (t(6)A37) in tRNAs that read codons beginning with adenine. Is a component of the KEOPS complex that is probably involved in the transfer of the threonylcarbamoyl moiety of threonylcarbamoyl-AMP (TC-AMP) to the N6 group of A37. The Kae1 domain likely plays a direct catalytic role in this reaction. The Bud32 domain probably displays kinase activity that regulates Kae1 function. This Thermoplasma acidophilum (strain ATCC 25905 / DSM 1728 / JCM 9062 / NBRC 15155 / AMRC-C165) protein is Probable bifunctional tRNA threonylcarbamoyladenosine biosynthesis protein.